A 616-amino-acid chain; its full sequence is UvrABC system protein C (616 aa).

The region spanning 12-91 (ESPGVYLWKD…IKEYHPRFNI (80 aa)) is the GIY-YIG domain. The UVR domain occupies 202–237 (SDVMHHVRERMLDASERLDFERAAELRDALAHLEKM).

The protein belongs to the UvrC family. In terms of assembly, interacts with UvrB in an incision complex.

Its subcellular location is the cytoplasm. The UvrABC repair system catalyzes the recognition and processing of DNA lesions. UvrC both incises the 5' and 3' sides of the lesion. The N-terminal half is responsible for the 3' incision and the C-terminal half is responsible for the 5' incision. The sequence is that of UvrABC system protein C from Gemmatimonas aurantiaca (strain DSM 14586 / JCM 11422 / NBRC 100505 / T-27).